Here is a 241-residue protein sequence, read N- to C-terminus: LexA repressor (241 aa).

The H-T-H motif DNA-binding region spans 41–61 (FREIGNAAGLKSPSSVKHQLQ). Active-site for autocatalytic cleavage activity residues include Ser165 and Lys202.

This sequence belongs to the peptidase S24 family. Homodimer.

It carries out the reaction Hydrolysis of Ala-|-Gly bond in repressor LexA.. Represses a number of genes involved in the response to DNA damage (SOS response), including recA and lexA. In the presence of single-stranded DNA, RecA interacts with LexA causing an autocatalytic cleavage which disrupts the DNA-binding part of LexA, leading to derepression of the SOS regulon and eventually DNA repair. This chain is LexA repressor, found in Bifidobacterium longum (strain DJO10A).